The following is a 305-amino-acid chain: Peroxisome biogenesis factor 2 (305 aa).

Residues 1–15 lie on the Peroxisomal matrix side of the membrane; it reads MAAREESTQSANRVL. Residues 16–42 form a helical membrane-spanning segment; it reads RISQLDALELNKALEQLVWSQFTQCFH. Residues 43 to 48 lie on the Cytoplasmic side of the membrane; it reads GFKPGL. Residues 49–74 form a helical membrane-spanning segment; sequence LARFEPEVKAFLWLFLWRFTIYSKNA. The Peroxisomal matrix segment spans residues 75–98; that stretch reads TVGQSVLNIQYKNDSSPNPVYQPP. A helical transmembrane segment spans residues 99–125; it reads SKNQKLLYAVCTIGGRWLEERCYDLFR. Residues 126 to 133 are Cytoplasmic-facing; it reads NRHLASFG. A helical transmembrane segment spans residues 134–160; sequence KAKQCMNFVVGLLKLGELMNFLIFLQK. The Peroxisomal matrix portion of the chain corresponds to 161–187; it reads GKFATLTERLLGIHSVFCKPQSMREVG. Residues 188–211 traverse the membrane as a helical segment; that stretch reads FEYMNRELLWHGFAEFLVFLLPLI. The Cytoplasmic portion of the chain corresponds to 212–305; the sequence is NIQKLKAKLS…GIEMSEVNAL (94 aa). Zn(2+) contacts are provided by C244, C247, C259, H261, C264, C267, C280, and C283. The RING-type zinc finger occupies 244 to 284; that stretch reads CALCGEWPTMPHTIGCEHVFCYYCVKSSFLFDMYFTCPKCG.

This sequence belongs to the pex2/pex10/pex12 family. In terms of assembly, component of the PEX2-PEX10-PEX12 retrotranslocation channel, composed of PEX2, PEX10 and PEX12. In terms of processing, forms intramolecular and intermolecular disulfide bonds in response to reactive oxygen species (ROS), promoting higher stability.

Its subcellular location is the peroxisome membrane. It catalyses the reaction [E2 ubiquitin-conjugating enzyme]-S-ubiquitinyl-L-cysteine + [acceptor protein]-L-cysteine = [E2 ubiquitin-conjugating enzyme]-L-cysteine + [acceptor protein]-S-ubiquitinyl-L-cysteine.. The enzyme catalyses S-ubiquitinyl-[E2 ubiquitin-conjugating enzyme]-L-cysteine + [acceptor protein]-L-lysine = [E2 ubiquitin-conjugating enzyme]-L-cysteine + N(6)-ubiquitinyl-[acceptor protein]-L-lysine.. The protein operates within protein modification; protein ubiquitination. Functionally, E3 ubiquitin-protein ligase component of a retrotranslocation channel required for peroxisome organization by mediating export of the PEX5 receptor from peroxisomes to the cytosol, thereby promoting PEX5 recycling. The retrotranslocation channel is composed of PEX2, PEX10 and PEX12; each subunit contributing transmembrane segments that coassemble into an open channel that specifically allows the passage of PEX5 through the peroxisomal membrane. PEX2 also regulates peroxisome organization by acting as a E3 ubiquitin-protein ligase. PEX2 ubiquitinates PEX5 during its passage through the retrotranslocation channel: catalyzes monoubiquitination of PEX5 at 'Cys-11', a modification that acts as a signal for PEX5 extraction into the cytosol. Required for pexophagy in response to starvation by mediating ubiquitination of peroxisomal proteins, such as PEX5 and ABCD3/PMP70. Also involved in the response to reactive oxygen species (ROS) by mediating 'Lys-48'-linked polyubiquitination and subsequent degradation of PNPLA2/ATGL, thereby regulating lipolysis. This chain is Peroxisome biogenesis factor 2 (Pex2), found in Rattus norvegicus (Rat).